The sequence spans 557 residues: Glutathione hydrolase proenzyme (557 aa).

The signal sequence occupies residues 1 to 24; the sequence is MQPVLFRTLSLGVAIAAASSSAFA. Position 94 (arginine 94) interacts with L-glutamate. Threonine 364 (nucleophile) is an active-site residue. L-glutamate contacts are provided by residues threonine 382, asparagine 384, glutamate 403, aspartate 406, 435 to 436, and 456 to 457; these read SS and GG.

Belongs to the gamma-glutamyltransferase family. In terms of assembly, this enzyme consists of two polypeptide chains, which are synthesized in precursor form from a single polypeptide. In terms of processing, cleaved by autocatalysis into a large and a small subunit.

The protein resides in the periplasm. It carries out the reaction an N-terminal (5-L-glutamyl)-[peptide] + an alpha-amino acid = 5-L-glutamyl amino acid + an N-terminal L-alpha-aminoacyl-[peptide]. The enzyme catalyses glutathione + H2O = L-cysteinylglycine + L-glutamate. It catalyses the reaction an S-substituted glutathione + H2O = an S-substituted L-cysteinylglycine + L-glutamate. The protein operates within sulfur metabolism; glutathione metabolism. The sequence is that of Glutathione hydrolase proenzyme (ggt) from Pseudomonas aeruginosa (strain ATCC 15692 / DSM 22644 / CIP 104116 / JCM 14847 / LMG 12228 / 1C / PRS 101 / PAO1).